Reading from the N-terminus, the 710-residue chain is Early transcription factor 82 kDa subunit (710 aa).

It belongs to the poxviridae VETF large subunit family. As to quaternary structure, heterodimer of a 70 kDa and a 82 kDa subunit. Part of the early transcription complex composed of ETF, RAP94/OPG109, and the DNA-directed RNA polymerase.

The protein localises to the virion. In terms of biological role, acts with RNA polymerase to initiate transcription from early gene promoters. Is recruited by the RPO-associated protein of 94 kDa RAP94/OPG109 to form the early transcription complex, which also contains the core RNA polymerase. ETF heterodimer binds to early gene promoters. The protein is Early transcription factor 82 kDa subunit (OPG133) of Variola virus (isolate Human/India/Ind3/1967) (VARV).